The chain runs to 382 residues: Mitogen-activated protein kinase 9 (382 aa).

The region spanning 26-321 (YQQLKPIGSG…VDEALRHPYI (296 aa)) is the Protein kinase domain. Residues 33–38 (GSGAQG) and lysine 55 each bind ATP. Aspartate 151 serves as the catalytic Proton acceptor. A Phosphothreonine modification is found at threonine 183. The short motif at 183–185 (TPY) is the TXY element. Tyrosine 185 carries the post-translational modification Phosphotyrosine.

It belongs to the protein kinase superfamily. CMGC Ser/Thr protein kinase family. MAP kinase subfamily. Mg(2+) is required as a cofactor. Post-translationally, dually phosphorylated on Thr-183 and Tyr-185, which activates the enzyme. Expressed in the neuroepithelium of developing brain at stages 16 to 26.

The catalysed reaction is L-seryl-[protein] + ATP = O-phospho-L-seryl-[protein] + ADP + H(+). It catalyses the reaction L-threonyl-[protein] + ATP = O-phospho-L-threonyl-[protein] + ADP + H(+). With respect to regulation, activated by threonine and tyrosine phosphorylation. Functionally, responds to activation by environmental stress and pro-inflammatory cytokines by phosphorylating a number of transcription factors, primarily components of AP-1 such as JUN and ATF2 and thus regulates AP-1 transcriptional activity. May play a role in the development of the central nervous system during embryogenesis. May play a role in the regulation of the circadian clock. The chain is Mitogen-activated protein kinase 9 (MAPK9) from Gallus gallus (Chicken).